Consider the following 353-residue polypeptide: 2-oxoglutarate-Fe(II) type oxidoreductase ppzD (353 aa).

A Fe2OG dioxygenase domain is found at 181–292 (NTSELRLNHY…RYSVAYFGKP (112 aa)). Residues histidine 208, aspartate 210, and histidine 268 each contribute to the Fe cation site. Arginine 283 contributes to the 2-oxoglutarate binding site.

The protein belongs to the iron/ascorbate-dependent oxidoreductase family. It depends on Fe(2+) as a cofactor.

It catalyses the reaction L-proline + 2-oxoglutarate + O2 = trans-4-hydroxy-L-proline + succinate + CO2. The catalysed reaction is L-proline + 2-oxoglutarate + O2 = trans-3-hydroxy-L-proline + succinate + CO2. The enzyme catalyses D-proline + 2-oxoglutarate + O2 = cis-4-hydroxy-D-proline + succinate + CO2. It participates in secondary metabolite biosynthesis. 2-oxoglutarate-Fe(II) type oxidoreductase; part of the gene cluster that mediates the biosynthesis of pyrrolopyrazines, secondary metabolites showing insecticidal activity. Within the pathway, ppzD converts L-proline into trans-4-hydroxy-L-proline as a major product, yielding a key precursor for peramine biosynthesis. PpzD is also able to convert L-proline into trans-3-hydroxy-L-proline. The single multifunctional NRPS ppzA is sufficient to produce peramine via condensation of 1-pyrroline-5-carboxylate and arginine, N-methylation of the alpha-amino group of arginine and reduction of the thioester and the cyclization to form an iminium ion resulting in release from the peptide synthetase. Deprotonation of this intermediate and oxidation of the pyrroline ring would give rise to peramine. In Epichloe species that produce only peramine, the peramine synthetase gene is not localized in a gene cluster, in contrast to Metarhizium species that contain additional pyrrolopyrazine biosynthesis genes. The 2-oxoglutarate-Fe(II) type oxidoreductase ppzC hydroxylates peramine to yield the newly identified compound 8-hydroxyperamine whereas ppzD converts L-proline into trans-4-hydroxy-L-proline, a precursor of peramine biosynthesis. This chain is 2-oxoglutarate-Fe(II) type oxidoreductase ppzD, found in Metarhizium rileyi (strain RCEF 4871) (Nomuraea rileyi).